We begin with the raw amino-acid sequence, 255 residues long: Type III pantothenate kinase (255 aa).

6-13 (DVGNTNTV) contributes to the ATP binding site. Residues tyrosine 100 and 107-110 (GADR) each bind substrate. Aspartate 109 serves as the catalytic Proton acceptor. A K(+)-binding site is contributed by aspartate 129. Residue threonine 132 coordinates ATP. Threonine 184 is a binding site for substrate.

The protein belongs to the type III pantothenate kinase family. In terms of assembly, homodimer. It depends on NH4(+) as a cofactor. Requires K(+) as cofactor.

Its subcellular location is the cytoplasm. The catalysed reaction is (R)-pantothenate + ATP = (R)-4'-phosphopantothenate + ADP + H(+). The protein operates within cofactor biosynthesis; coenzyme A biosynthesis; CoA from (R)-pantothenate: step 1/5. Its function is as follows. Catalyzes the phosphorylation of pantothenate (Pan), the first step in CoA biosynthesis. The sequence is that of Type III pantothenate kinase from Syntrophomonas wolfei subsp. wolfei (strain DSM 2245B / Goettingen).